A 193-amino-acid chain; its full sequence is Orotate phosphoribosyltransferase (193 aa).

Position 116–124 (116–124 (EDVVTTGKS)) interacts with 5-phospho-alpha-D-ribose 1-diphosphate. Thr120 and Arg148 together coordinate orotate.

The protein belongs to the purine/pyrimidine phosphoribosyltransferase family. PyrE subfamily. As to quaternary structure, homodimer. Mg(2+) is required as a cofactor.

The catalysed reaction is orotidine 5'-phosphate + diphosphate = orotate + 5-phospho-alpha-D-ribose 1-diphosphate. It functions in the pathway pyrimidine metabolism; UMP biosynthesis via de novo pathway; UMP from orotate: step 1/2. Catalyzes the transfer of a ribosyl phosphate group from 5-phosphoribose 1-diphosphate to orotate, leading to the formation of orotidine monophosphate (OMP). This chain is Orotate phosphoribosyltransferase, found in Clostridium tetani (strain Massachusetts / E88).